A 1226-amino-acid polypeptide reads, in one-letter code: Probable phosphorylase b kinase regulatory subunit alpha (1226 aa).

A disordered region spans residues asparagine 666–serine 688. Residues arginine 679 to serine 688 show a composition bias toward basic and acidic residues.

It belongs to the phosphorylase b kinase regulatory chain family.

Its pathway is glycan biosynthesis; glycogen metabolism. Its function is as follows. Phosphorylase b kinase catalyzes the phosphorylation of serine in certain substrates, including troponin I. The alpha chain may bind calmodulin. This is Probable phosphorylase b kinase regulatory subunit alpha from Caenorhabditis elegans.